The chain runs to 247 residues: tRNA pseudouridine synthase A (247 aa).

Asp53 serves as the catalytic Nucleophile. Tyr112 contributes to the substrate binding site.

This sequence belongs to the tRNA pseudouridine synthase TruA family. Homodimer.

The catalysed reaction is uridine(38/39/40) in tRNA = pseudouridine(38/39/40) in tRNA. Functionally, formation of pseudouridine at positions 38, 39 and 40 in the anticodon stem and loop of transfer RNAs. The chain is tRNA pseudouridine synthase A from Anaplasma marginale (strain Florida).